The following is a 223-amino-acid chain: Phosphoribosylformylglycinamidine synthase subunit PurQ (223 aa).

One can recognise a Glutamine amidotransferase type-1 domain in the interval 4-223 (FAVIVFPGTN…FKSIVEWMKK (220 aa)). C85 functions as the Nucleophile in the catalytic mechanism. Catalysis depends on residues H196 and E198.

In terms of assembly, part of the FGAM synthase complex composed of 1 PurL, 1 PurQ and 2 PurS subunits.

It is found in the cytoplasm. It carries out the reaction N(2)-formyl-N(1)-(5-phospho-beta-D-ribosyl)glycinamide + L-glutamine + ATP + H2O = 2-formamido-N(1)-(5-O-phospho-beta-D-ribosyl)acetamidine + L-glutamate + ADP + phosphate + H(+). It catalyses the reaction L-glutamine + H2O = L-glutamate + NH4(+). Its pathway is purine metabolism; IMP biosynthesis via de novo pathway; 5-amino-1-(5-phospho-D-ribosyl)imidazole from N(2)-formyl-N(1)-(5-phospho-D-ribosyl)glycinamide: step 1/2. Its function is as follows. Part of the phosphoribosylformylglycinamidine synthase complex involved in the purines biosynthetic pathway. Catalyzes the ATP-dependent conversion of formylglycinamide ribonucleotide (FGAR) and glutamine to yield formylglycinamidine ribonucleotide (FGAM) and glutamate. The FGAM synthase complex is composed of three subunits. PurQ produces an ammonia molecule by converting glutamine to glutamate. PurL transfers the ammonia molecule to FGAR to form FGAM in an ATP-dependent manner. PurS interacts with PurQ and PurL and is thought to assist in the transfer of the ammonia molecule from PurQ to PurL. This chain is Phosphoribosylformylglycinamidine synthase subunit PurQ, found in Pyrococcus horikoshii (strain ATCC 700860 / DSM 12428 / JCM 9974 / NBRC 100139 / OT-3).